The chain runs to 359 residues: MAP kinase-activated protein kinase 2 (359 aa).

The Protein kinase domain maps to V20–I281. Residues L26–V34 and K49 each bind ATP. D142 (proton acceptor) is an active-site residue.

This sequence belongs to the protein kinase superfamily. CAMK Ser/Thr protein kinase family. Phosphorylated and activated by MAP kinase.

The enzyme catalyses L-seryl-[protein] + ATP = O-phospho-L-seryl-[protein] + ADP + H(+). The catalysed reaction is L-threonyl-[protein] + ATP = O-phospho-L-threonyl-[protein] + ADP + H(+). In terms of biological role, its physiological substrate seems to be the small heat shock protein (HSP27/HSP25). This Drosophila melanogaster (Fruit fly) protein is MAP kinase-activated protein kinase 2 (MAPk-Ak2).